The sequence spans 674 residues: Methionine--tRNA ligase (674 aa).

Residues 11-21 carry the 'HIGH' region motif; sequence PYANGDLHLGH. 4 residues coordinate Zn(2+): C142, C145, C155, and C158. The 'KMSKS' region motif lies at 330-334; it reads KMSKS. K333 is an ATP binding site. The region spanning 574–674 is the tRNA-binding domain; the sequence is DFMKVDLRIA…EGAQPGMRVK (101 aa).

It belongs to the class-I aminoacyl-tRNA synthetase family. MetG type 1 subfamily. Homodimer. Requires Zn(2+) as cofactor.

It is found in the cytoplasm. It catalyses the reaction tRNA(Met) + L-methionine + ATP = L-methionyl-tRNA(Met) + AMP + diphosphate. In terms of biological role, is required not only for elongation of protein synthesis but also for the initiation of all mRNA translation through initiator tRNA(fMet) aminoacylation. The sequence is that of Methionine--tRNA ligase from Francisella tularensis subsp. holarctica (strain OSU18).